The chain runs to 328 residues: MNLTKMAVFAASLFCLACKNDIDTELEKKSIPESEIQKSEEKLPNEEELTPTDPDEETNKEETVTANATYDFTGNTPPPAPQGMKWVKISQLSDEFNNGFNTDKWTKSLWNYGVPVQMKAENSGVSDGKLWIKATLGNDPERWFETSRVMSKAQVNYPMYTVSRIKGAHISAYNTFWLNNGNISNRNEIDVIENNSNPSCNCQPDFPWQMNSQYFHVVNDDTKRNKGNFDNRELSDANPLKGVAWNEEYHTFGVWWKDATHIQFYLDGEPAGSVVSARDFTRELNIIWDLWTVDADWLGGLAKKEHLSNNNINTMKIDWIHTYQLVEE.

The N-terminal stretch at 1–17 (MNLTKMAVFAASLFCLA) is a signal peptide. Positions 18-67 (CKNDIDTELEKKSIPESEIQKSEEKLPNEEELTPTDPDEETNKEETVTAN) are excised as a propeptide. A compositionally biased stretch (basic and acidic residues) spans 26–45 (LEKKSIPESEIQKSEEKLPN). Positions 26–61 (LEKKSIPESEIQKSEEKLPNEEELTPTDPDEETNKE) are disordered. Acidic residues predominate over residues 46 to 59 (EEELTPTDPDEETN). In terms of domain architecture, GH16 spans 70–328 (YDFTGNTPPP…WIHTYQLVEE (259 aa)). Substrate-binding positions include Trp-110, 119 to 129 (KAENSGVSDGK), 133 to 135 (KAT), Glu-188, Glu-193, and Arg-224. Residue Glu-188 is the Nucleophile of the active site. Glu-193 acts as the Proton donor in catalysis.

It belongs to the glycosyl hydrolase 16 family.

It localises to the secreted. It carries out the reaction Hydrolysis of (1-&gt;4)-beta-D-galactosidic linkages in agarose, giving the tetramer as the predominant product.. Its function is as follows. Cleaves the beta-1,4-linkages between beta-D-galactose and alpha-L-3,6-anhydro-galactose residues in agarose. Cleaves agarose in a random manner with retention of the anomeric-bond configuration, producing beta-anomers that give rise progressively to alpha-anomers when mutarotation takes place. This Zobellia galactanivorans (strain DSM 12802 / CCUG 47099 / CIP 106680 / NCIMB 13871 / Dsij) protein is Beta-agarase C (agaC).